A 118-amino-acid polypeptide reads, in one-letter code: UPF0102 protein Swit_0572 (118 aa).

Belongs to the UPF0102 family.

This chain is UPF0102 protein Swit_0572, found in Rhizorhabdus wittichii (strain DSM 6014 / CCUG 31198 / JCM 15750 / NBRC 105917 / EY 4224 / RW1) (Sphingomonas wittichii).